We begin with the raw amino-acid sequence, 312 residues long: Olfactory receptor-like protein COR6 (312 aa).

The Extracellular portion of the chain corresponds to Met-1–Pro-26. A glycan (N-linked (GlcNAc...) asparagine) is linked at Asn-5. The helical transmembrane segment at Leu-27–Ile-49 threads the bilayer. The Cytoplasmic segment spans residues Ser-50–Thr-57. A helical transmembrane segment spans residues Pro-58 to Pro-79. Residues Lys-80–Gln-100 lie on the Extracellular side of the membrane. An intrachain disulfide couples Cys-97 to Cys-179. Residues Tyr-101 to Tyr-120 form a helical membrane-spanning segment. The Cytoplasmic portion of the chain corresponds to Asp-121–Ala-139. Residues Val-140–Leu-164 form a helical membrane-spanning segment. Residues Lys-165–Leu-205 lie on the Extracellular side of the membrane. The chain crosses the membrane as a helical span at residues Phe-206 to Val-226. Residues Arg-227 to Ser-239 lie on the Cytoplasmic side of the membrane. The chain crosses the membrane as a helical span at residues Thr-240 to Phe-260. Over Gln-261–Asp-271 the chain is Extracellular. The helical transmembrane segment at Lys-272 to Trp-292 threads the bilayer. Topologically, residues Arg-293–His-312 are cytoplasmic.

Belongs to the G-protein coupled receptor 1 family.

It localises to the cell membrane. Odorant receptor. The polypeptide is Olfactory receptor-like protein COR6 (COR6) (Gallus gallus (Chicken)).